The chain runs to 262 residues: Indole-3-glycerol phosphate synthase (262 aa).

Belongs to the TrpC family.

It carries out the reaction 1-(2-carboxyphenylamino)-1-deoxy-D-ribulose 5-phosphate + H(+) = (1S,2R)-1-C-(indol-3-yl)glycerol 3-phosphate + CO2 + H2O. It functions in the pathway amino-acid biosynthesis; L-tryptophan biosynthesis; L-tryptophan from chorismate: step 4/5. The polypeptide is Indole-3-glycerol phosphate synthase (Bordetella avium (strain 197N)).